The sequence spans 439 residues: ATP-dependent RNA helicase RhlB (439 aa).

Positions 9–37 (QKFADLPLCDEVKQALNENGFEHCTPIQA) match the Q motif motif. Residues 40–219 (LPVLLEKKDI…YDHMNDPVKV (180 aa)) form the Helicase ATP-binding domain. Position 53 to 60 (53 to 60 (AQTGTGKT)) interacts with ATP. The short motif at 165 to 168 (DEAD) is the DEAD box element. The Helicase C-terminal domain maps to 243–390 (KLKLLHSLIE…VTSYDRDALI (148 aa)). Positions 394–439 (PPVKIHRKPHAGGRNLRDRNGSPRPSGSHRSGSGRPPRHDRTRRHS) are disordered. The segment covering 415 to 428 (SPRPSGSHRSGSGR) has biased composition (low complexity). The span at 429-439 (PPRHDRTRRHS) shows a compositional bias: basic residues.

It belongs to the DEAD box helicase family. RhlB subfamily. In terms of assembly, component of the RNA degradosome, which is a multiprotein complex involved in RNA processing and mRNA degradation.

It localises to the cytoplasm. The enzyme catalyses ATP + H2O = ADP + phosphate + H(+). Its function is as follows. DEAD-box RNA helicase involved in RNA degradation. Has RNA-dependent ATPase activity and unwinds double-stranded RNA. The chain is ATP-dependent RNA helicase RhlB from Shewanella amazonensis (strain ATCC BAA-1098 / SB2B).